A 120-amino-acid chain; its full sequence is MDKKVSRLRRAVPTRRKIAQLRVHRLSVFRSNLHIYANIISPEGDRVLVSASTLEAEVRAQLGGAGKGGNATAAALVGKRVAEKAKAAGIELVAFDRSGFRYHGRVKALAEAAREAGLKF.

This sequence belongs to the universal ribosomal protein uL18 family. Part of the 50S ribosomal subunit; part of the 5S rRNA/L5/L18/L25 subcomplex. Contacts the 5S and 23S rRNAs.

Its function is as follows. This is one of the proteins that bind and probably mediate the attachment of the 5S RNA into the large ribosomal subunit, where it forms part of the central protuberance. The protein is Large ribosomal subunit protein uL18 of Bordetella bronchiseptica (strain ATCC BAA-588 / NCTC 13252 / RB50) (Alcaligenes bronchisepticus).